Reading from the N-terminus, the 287-residue chain is tRNA selenocysteine 1-associated protein 1 (287 aa).

2 RRM domains span residues 3 to 86 (ASLW…YATY) and 96 to 175 (YSLF…VAIP).

It belongs to the RRM TRSPAP family. In terms of assembly, component of the tRNA(Sec) complex composed at least of EEFSEC, SECISBP2, SEPHS1, SEPSECS, TRNAU1AP and tRNA(Sec). Found in a complex with tRNA(Sec). Interacts with SEPSECS. Associates with mRNP and/or polysomes. Found in a complex with EEFSEC, SECISBP2, TRNAU1AP and tRNA(Sec).

The protein localises to the nucleus. It is found in the cytoplasm. Its function is as follows. Involved in the early steps of selenocysteine biosynthesis and tRNA(Sec) charging to the later steps resulting in the cotranslational incorporation of selenocysteine into selenoproteins. Stabilizes the SECISBP2, EEFSEC and tRNA(Sec) complex. May be involved in the methylation of tRNA(Sec). Enhances efficiency of selenoproteins synthesis. The protein is tRNA selenocysteine 1-associated protein 1 (TRNAU1AP) of Homo sapiens (Human).